A 126-amino-acid chain; its full sequence is Heavy metal-associated isoprenylated plant protein 14 (126 aa).

One can recognise an HMA domain in the interval 3–69 (AKNAVLQLSI…LCNTEIVSVD (67 aa)). A Cysteine methyl ester modification is found at C123. C123 is lipidated: S-farnesyl cysteine. Residues 124–126 (VIM) constitute a propeptide, removed in mature form.

The protein belongs to the HIPP family.

Probable heavy-metal-binding protein. In Arabidopsis thaliana (Mouse-ear cress), this protein is Heavy metal-associated isoprenylated plant protein 14.